Consider the following 540-residue polypeptide: Eukaryotic translation initiation factor 3 subunit L (540 aa).

The PCI domain occupies 307-515 (TFSDILLYIQ…IHIADTKVSH (209 aa)).

This sequence belongs to the eIF-3 subunit L family. Component of the eukaryotic translation initiation factor 3 (eIF-3) complex. The eIF-3 complex interacts with pix.

It localises to the cytoplasm. Its function is as follows. Component of the eukaryotic translation initiation factor 3 (eIF-3) complex, which is involved in protein synthesis of a specialized repertoire of mRNAs and, together with other initiation factors, stimulates binding of mRNA and methionyl-tRNAi to the 40S ribosome. The eIF-3 complex specifically targets and initiates translation of a subset of mRNAs involved in cell proliferation. In Drosophila grimshawi (Hawaiian fruit fly), this protein is Eukaryotic translation initiation factor 3 subunit L.